The sequence spans 412 residues: Divalent metal cation transporter MntH (412 aa).

The Cytoplasmic segment spans residues 1-19; the sequence is MTNYRVESSSGRAARKMRL. Residues 20–39 form a helical membrane-spanning segment; sequence ALMGPAFIAAIGYIDPGNFA. Residues 40–51 are Periplasmic-facing; sequence TNIQAGASFGYQ. Residues 52–71 traverse the membrane as a helical segment; it reads LLWVVVWANLMAMLIQILSA. Residues 72–95 lie on the Cytoplasmic side of the membrane; it reads KLGIATGKNLAEQIRDHYPRPFVW. The chain crosses the membrane as a helical span at residues 96-118; the sequence is FYWVQAEIIAMATDLAEFIGAAI. Over 119-125 the chain is Periplasmic; sequence GFKLILG. Residues 126–145 traverse the membrane as a helical segment; that stretch reads VSLLQGAVLTGIATFLILML. At 146–155 the chain is on the cytoplasmic side; the sequence is QRRGQKPLEK. The helical transmembrane segment at 156–175 threads the bilayer; it reads VIGGLLLFVAAAYIVELIFS. Over 176–196 the chain is Periplasmic; sequence QPNLAQLGKGMVIPSLPTSEA. Residues 197–220 traverse the membrane as a helical segment; it reads VFLAAGVLGATIMPHVIYLHSSLT. Residues 221–238 are Cytoplasmic-facing; the sequence is QHLHGGSRQQRYSATKWD. Residues 239–258 form a helical membrane-spanning segment; the sequence is VAIAMTIAGFVNLAMMATAA. The Periplasmic segment spans residues 259–276; sequence AAFHFSGHTGVADLDEAY. A helical transmembrane segment spans residues 277–297; sequence LTLQPLLSHAAATVFGLSLVA. Residues 298 to 327 are Cytoplasmic-facing; that stretch reads AGLSSTVVGTLAGQVVMQGFIRFHIPLWVR. Residues 328 to 344 traverse the membrane as a helical segment; it reads RTVTMLPSFIVILMGLD. At 345–350 the chain is on the periplasmic side; it reads PTRILV. A helical transmembrane segment spans residues 351 to 370; it reads MSQVLLSFGIALALVPLLIF. Residues 371–387 lie on the Cytoplasmic side of the membrane; that stretch reads TSDSKLMGDLVNSKRVK. The helical transmembrane segment at 388 to 406 threads the bilayer; the sequence is QTGWVIVVLVVALNIWLLV. The Periplasmic segment spans residues 407–412; it reads GTALGL.

It belongs to the NRAMP family.

The protein localises to the cell inner membrane. In terms of biological role, h(+)-stimulated, divalent metal cation uptake system. The polypeptide is Divalent metal cation transporter MntH (Escherichia coli O127:H6 (strain E2348/69 / EPEC)).